Consider the following 262-residue polypeptide: Small ribosomal subunit protein uS2 (262 aa).

The segment at 236-262 (AGGAAEAPAAEDVQTEEAAAPEADSAE) is disordered.

The protein belongs to the universal ribosomal protein uS2 family.

The polypeptide is Small ribosomal subunit protein uS2 (Psychrobacter sp. (strain PRwf-1)).